The chain runs to 156 residues: V-type proton ATPase 16 kDa proteolipid subunit c (156 aa).

Residues 1–7 (MAENPIY) lie on the Lumenal side of the membrane. The helical transmembrane segment at 8 to 30 (GPFFGVMGAASAIIFSALGAAYG) threads the bilayer. Residues 31–52 (TAKSGTGIAAMSVMRPELIMKS) lie on the Cytoplasmic side of the membrane. Residues 53-73 (IIPVVMAGIIAIYGLVVAVLI) form a helical membrane-spanning segment. Over 74–92 (AGSLDAPSNNYTLYKGFIH) the chain is Lumenal. The chain crosses the membrane as a helical span at residues 93–114 (LGAGLAVGFSGLAAGFAIGIVG). The Cytoplasmic portion of the chain corresponds to 115–126 (DAGVRGTAQQPR). Residues 127–152 (LFVGMILILIFAEVLGLYGLIVAIYL) traverse the membrane as a helical segment. Over 153–156 (YTKQ) the chain is Lumenal.

The protein belongs to the V-ATPase proteolipid subunit family. V-ATPase is a heteromultimeric enzyme made up of two complexes: the ATP-hydrolytic V1 complex and the proton translocation V0 complex. The V1 complex consists of three catalytic AB heterodimers that form a heterohexamer, three peripheral stalks each consisting of EG heterodimers, one central rotor including subunits D and F, and the regulatory subunits C and H. The proton translocation complex V0 consists of the proton transport subunit a, a ring of proteolipid subunits c9c'', rotary subunit d, subunits e and f, and the accessory subunits VhaAC45 and ATP6AP2.

The protein localises to the membrane. In terms of biological role, proton-conducting pore forming subunit of the V0 complex of vacuolar(H+)-ATPase (V-ATPase), a multisubunit enzyme composed of a peripheral complex (V1) that hydrolyzes ATP and a membrane integral complex (V0) that translocates protons. V-ATPase is responsible for acidifying and maintaining the pH of intracellular compartments and in some cell types, is targeted to the plasma membrane, where it is responsible for acidifying the extracellular environment. The sequence is that of V-type proton ATPase 16 kDa proteolipid subunit c (VHA16) from Heliothis virescens (Tobacco budworm moth).